The chain runs to 296 residues: Sulfotransferase 1C2 (296 aa).

A 3'-phosphoadenylyl sulfate-binding site is contributed by 49–54 (KAGTTW). 107–109 (KTH) provides a ligand contact to substrate. The active-site Proton acceptor is the histidine 109. 3'-phosphoadenylyl sulfate-binding positions include arginine 131, serine 139, tyrosine 194, and 228–233 (TSFEKM). Serine 139 is subject to Phosphoserine. At serine 254 the chain carries Phosphoserine. A 3'-phosphoadenylyl sulfate-binding site is contributed by 256-260 (FMRKG).

It belongs to the sulfotransferase 1 family. As to expression, found in adult stomach, kidney and thyroid gland, and in fetal kidney and liver.

It is found in the cytoplasm. Its subcellular location is the lysosome. The protein localises to the mitochondrion. It carries out the reaction a phenol + 3'-phosphoadenylyl sulfate = an aryl sulfate + adenosine 3',5'-bisphosphate + H(+). The enzyme catalyses cholesterol + 3'-phosphoadenylyl sulfate = cholesterol sulfate + adenosine 3',5'-bisphosphate + H(+). Its function is as follows. Sulfotransferase that utilizes 3'-phospho-5'-adenylyl sulfate (PAPS) to catalyze the sulfate conjugation of phenolic compounds. Does not transfer sulfate to steroids, dopamine, acetaminophen, or alpha-naphthol. Except in mitochondria, where it can add sulfate to cholesterol producing cholesterol sulfate, which alters mitochondrial membrane organization, and impacts protein complex mobility increasing state-III respiration, thereby modulating mitochondrial respiration. Catalyzes the sulfation of the carcinogenic N-hydroxy-2-acetylaminofluorene leading to highly reactive intermediates capable of forming DNA adducts, potentially resulting in mutagenesis. This chain is Sulfotransferase 1C2 (SULT1C2), found in Homo sapiens (Human).